We begin with the raw amino-acid sequence, 132 residues long: Large ribosomal subunit protein uL22c (132 aa).

This sequence belongs to the universal ribosomal protein uL22 family. Part of the 50S ribosomal subunit.

It localises to the plastid. It is found in the chloroplast. Its function is as follows. This protein binds specifically to 23S rRNA. The globular domain of the protein is located near the polypeptide exit tunnel on the outside of the subunit, while an extended beta-hairpin is found that lines the wall of the exit tunnel in the center of the 70S ribosome. The chain is Large ribosomal subunit protein uL22c (rpl22) from Staurastrum punctulatum (Green alga).